Reading from the N-terminus, the 502-residue chain is MASKKLGTDVHGTFSYLDDVPFKIGDKFKTPAKVGLPIGFSLPDCLQVVREMQYDFSLEKKTIEWAEDIKLIQEAQREAERKAEEAEAKVNSKSGPEGDSKVSFPKTHNTATMPPPINPILASLQHNNILTPTRVSSSATKQKVLSPPHTKADFNPADFECEEDPFDNLELKTIDEKEELRNILVGTTGPIMAQLLDSNTARGSSGAVLQDEEVLASLEQATLDFKPLHKPNGFITLPQLGNCEKMSLSSKVSLPPIPTVSNIKSLSFPKLDSDDSNQKTVKLASTFHSTSCLRSGASRSLLKPSTQSSASELNGDHTLGLSALNLNSGTEVPTLTSSQMPSLSSVSVCTEESSPPDPCPTVTPLNFSVSQVPNMPSCPQAYLELQALSPSERQCVETVVNMGYSYDCVLRAMRKKGENIEQILDYLFAHGQLCEKGFDPLLVEEALEMHQCSEEKMMEFLQLMSKFKEMGFELKDIKEVLLLHNNDQDNALEDLMARAGAS.

An interaction with ESCRT-I region spans residues 1-95; the sequence is MASKKLGTDV…AEAKVNSKSG (95 aa). In terms of domain architecture, UMA spans 17-63; it reads LDDVPFKIGDKFKTPAKVGLPIGFSLPDCLQVVREMQYDFSLEKKTI. Residues 80 to 100 show a composition bias toward basic and acidic residues; that stretch reads ERKAEEAEAKVNSKSGPEGDS. Disordered regions lie at residues 80 to 117 and 135 to 156; these read ERKAEEAEAKVNSKSGPEGDSKVSFPKTHNTATMPPPI and VSSSATKQKVLSPPHTKADFNP. Phosphoserine occurs at positions 146, 205, and 289. An interaction with PTPN23 region spans residues 260-290; it reads VSNIKSLSFPKLDSDDSNQKTVKLASTFHST. UBA domains lie at 389-430 and 451-498; these read SPSE…LFAH and QCSE…LMAR.

As to quaternary structure, component of an ESCRT-I complex (endosomal sorting complex required for transport I) which consists of TSG101, VPS28, VPS37A and UBAP1 in a 1:1:1:1 stoichiometry. Interacts with PTPN23. Interacts (via UBA domains) with ubiquitinated proteins. As to expression, ubiquitous. Highly expressed in heart, liver, brain, kidney, spleen, skeletal muscle, stomach, testis and lung.

The protein resides in the cytoplasm. It is found in the cytosol. The protein localises to the endosome. In terms of biological role, component of the ESCRT-I complex, a regulator of vesicular trafficking process. Binds to ubiquitinated cargo proteins and is required for the sorting of endocytic ubiquitinated cargos into multivesicular bodies (MVBs). Plays a role in the proteasomal degradation of ubiquitinated cell-surface proteins, such as EGFR and BST2. The sequence is that of Ubiquitin-associated protein 1 from Mus musculus (Mouse).